We begin with the raw amino-acid sequence, 537 residues long: MALVKTETQALGNHQHSSRFGSLYVGDLSPDVTEKDLIDKFSLNVPVVSVHLCRNSVTGKSMCYAYINFDSPFSASNAMTRLNHSDLKGKAMRIMWSQRDLAYRRRTRTGFANLYVKNLDSSITSSCLERMFCPFGSILSCKVVEENGQSKGFGFVQFDTEQSAVSARSALHGSMVYGKKLFVAKFINKDERAAMAGNQDSTNVYVKNLIETVTDDCLHTLFSQYGTVSSVVVMRDGMGRSRGFGFVNFCNPENAKKAMESLCGLQLGSKKLFVGKALKKDERREMLKQKFSDNFIAKPNMRWSNLYVKNLSESMNETRLREIFGCYGQIVSAKVMCHENGRSKGFGFVCFSNCEESKQAKRYLNGFLVDGKPIVVRVAERKEDRIKRLQQYFQAQPRQYTQAPSAPSPAQPVLSYVSSSYGCFQPFQVGTSYYYMGNQVPQMSGHQNITTYVPAGKVPLKERRSMHLVYKHPAYPVAKRGAKQTLVFKGEVNRNLEAATCSKATTSEENRKEERRLTLSGKLSPEVKVEESGKQLQ.

RRM domains follow at residues 21 to 99 (GSLY…WSQR), 112 to 188 (ANLY…KFIN), 202 to 279 (TNVY…KALK), and 304 to 381 (SNLY…VAER). A disordered region spans residues 503 to 537 (KATTSEENRKEERRLTLSGKLSPEVKVEESGKQLQ). 2 stretches are compositionally biased toward basic and acidic residues: residues 506–517 (TSEENRKEERRL) and 525–537 (PEVK…KQLQ).

It belongs to the polyadenylate-binding protein type-1 family. As to expression, expressed at low levels in leaves and young seedlings.

The protein localises to the cytoplasm. It is found in the nucleus. Binds the poly(A) tail of mRNA. Appears to be an important mediator of the multiple roles of the poly(A) tail in mRNA biogenesis, stability and translation. The polypeptide is Polyadenylate-binding protein 6 (PAB6) (Arabidopsis thaliana (Mouse-ear cress)).